We begin with the raw amino-acid sequence, 446 residues long: Dual specificity mitogen-activated protein kinase kinase 2 (446 aa).

A compositionally biased stretch (low complexity) spans 27 to 42 (SSGSSAGLGFQGQSQQ). Residues 27 to 51 (SSGSSAGLGFQGQSQQHSTVNSMQG) form a disordered region. The Protein kinase domain maps to 149–414 (LKDLGEIGRG…YKELLKHPFI (266 aa)). ATP-binding positions include 155-163 (IGRGAYGSV) and lysine 178. Aspartate 276 serves as the catalytic Proton acceptor. Position 304 is a phosphoserine; by RAF (serine 304). Position 308 is a phosphothreonine; by RAF (threonine 308).

This sequence belongs to the protein kinase superfamily. STE Ser/Thr protein kinase family. MAP kinase kinase subfamily. Post-translationally, MAPKK is itself dependent on Ser/Thr phosphorylation for activity catalyzed by MAP kinase kinase kinases. In terms of tissue distribution, expressed abundantly in the adult brain and muscle.

The catalysed reaction is L-seryl-[protein] + ATP = O-phospho-L-seryl-[protein] + ADP + H(+). The enzyme catalyses L-threonyl-[protein] + ATP = O-phospho-L-threonyl-[protein] + ADP + H(+). It carries out the reaction L-tyrosyl-[protein] + ATP = O-phospho-L-tyrosyl-[protein] + ADP + H(+). Its function is as follows. Catalyzes the concomitant phosphorylation of a threonine and a tyrosine residue in a Thr-Glu-Tyr sequence located in MAP kinases. This chain is Dual specificity mitogen-activated protein kinase kinase 2 (map2k2), found in Xenopus laevis (African clawed frog).